A 694-amino-acid polypeptide reads, in one-letter code: Polynucleotide 3'-phosphatase ZDP (694 aa).

PARP-type zinc fingers lie at residues 50 to 132 and 165 to 247; these read VVAE…EQCG and VIAD…EVNK. Positions 62, 65, 93, 96, 177, 180, 208, and 211 each coordinate Zn(2+). A disordered region spans residues 266–331; that stretch reads AIADNELTEE…SPDSSKVISE (66 aa). The segment covering 302–321 has biased composition (basic and acidic residues); sequence ESKKPASDEISEQKTKDVKN. A compositionally biased stretch (polar residues) spans 322–331; that stretch reads SPDSSKVISE. The segment at 328-410 adopts a PARP-type 3 zinc-finger fold; sequence VISEYAKSSR…ALKELVQQCG (83 aa). The Zn(2+) site is built by cysteine 340, cysteine 343, histidine 371, and cysteine 374.

It in the C-terminal section; belongs to the DNA 3' phosphatase family. Interacts with ROS1 (via the central region). Binds to XRCC1.

The protein resides in the nucleus. The protein localises to the nucleoplasm. The catalysed reaction is a 3'end (2'-deoxyribonucleotide 3'-phosphate)-DNA + H2O = a 3'-end 2'-deoxyribonucleotide-DNA + phosphate. Activated by the presence of DNA. Stimulated by XRCC1. Its function is as follows. Nick-sensing 3'-phosphoesterase involved in a base excision repair pathway required for active DNA demethylation. The N-terminal DNA-binding domain binds specifically to gap sites and sharply bends the target DNA. Lacks 5'-kinase activity but is capable of 3'-phosphoglycolate end processing. Inactive on 3'-alpha,beta-unsaturated aldehyde (3'-dRP). Protects partially genes from transcriptional silencing by preventing promoter DNA hypermethylation. The polypeptide is Polynucleotide 3'-phosphatase ZDP (ZDP) (Arabidopsis thaliana (Mouse-ear cress)).